The primary structure comprises 391 residues: Succinyl-diaminopimelate desuccinylase (391 aa).

His-74 lines the Zn(2+) pocket. Residue Asp-76 is part of the active site. Zn(2+) is bound at residue Asp-107. Glu-141 acts as the Proton acceptor in catalysis. The Zn(2+) site is built by Glu-142, Glu-170, and His-360.

This sequence belongs to the peptidase M20A family. DapE subfamily. In terms of assembly, homodimer. Zn(2+) is required as a cofactor. It depends on Co(2+) as a cofactor.

The enzyme catalyses N-succinyl-(2S,6S)-2,6-diaminopimelate + H2O = (2S,6S)-2,6-diaminopimelate + succinate. Its pathway is amino-acid biosynthesis; L-lysine biosynthesis via DAP pathway; LL-2,6-diaminopimelate from (S)-tetrahydrodipicolinate (succinylase route): step 3/3. Functionally, catalyzes the hydrolysis of N-succinyl-L,L-diaminopimelic acid (SDAP), forming succinate and LL-2,6-diaminopimelate (DAP), an intermediate involved in the bacterial biosynthesis of lysine and meso-diaminopimelic acid, an essential component of bacterial cell walls. This is Succinyl-diaminopimelate desuccinylase from Variovorax paradoxus (strain S110).